A 317-amino-acid polypeptide reads, in one-letter code: D-alanine--D-alanine ligase (317 aa).

An ATP-grasp domain is found at 104–303 (KRVWLQHGLP…YAELCVAILA (200 aa)). 130 to 185 (PDRLGLPLILKPPHEGSTVGITKVAACADMEQAYAAASHFDEVVLAEQFVRGRELT) contributes to the ATP binding site. Residues Asp257, Glu270, and Asn272 each coordinate Mg(2+).

It belongs to the D-alanine--D-alanine ligase family. The cofactor is Mg(2+). Mn(2+) serves as cofactor.

The protein resides in the cytoplasm. The catalysed reaction is 2 D-alanine + ATP = D-alanyl-D-alanine + ADP + phosphate + H(+). It functions in the pathway cell wall biogenesis; peptidoglycan biosynthesis. In terms of biological role, cell wall formation. This is D-alanine--D-alanine ligase from Bordetella avium (strain 197N).